The following is a 217-amino-acid chain: Putative 3-methyladenine DNA glycosylase (217 aa).

Residues 105–145 form the RPE2 insert domain; it reads SHNNVYTIDTAKIKSQITDEKTQSIIIRKNRRIMKFYIPNL.

It belongs to the DNA glycosylase MPG family.

This is Putative 3-methyladenine DNA glycosylase from Rickettsia prowazekii (strain Madrid E).